The chain runs to 68 residues: Protein transport protein Sec61 gamma-2 subunit (68 aa).

Residues 1-32 (MDKVVKFAEPGRAFAKDSIRLVKRCTKPDRKE) lie on the Cytoplasmic side of the membrane. Residues 33–61 (FQKIAIATAVGFCIMGFIGFFVKLIHIPI) traverse the membrane as a helical segment. Residues 62–68 (NNIIVGS) are Extracellular-facing.

Belongs to the SecE/SEC61-gamma family. Heterotrimeric complex composed of SEC61-alpha, SEC61-beta and SEC61-gamma.

It is found in the endoplasmic reticulum membrane. Functionally, necessary for protein translocation in the endoplasmic reticulum. The protein is Protein transport protein Sec61 gamma-2 subunit (Sec61gamma) of Drosophila melanogaster (Fruit fly).